The chain runs to 888 residues: Probable disease resistance protein At5g63020 (888 aa).

Residues 22–66 (LNRNGDYIHGLEENLTALQRALEQIEQRREDLLRKILSEERRGLQ) adopt a coiled-coil conformation. An NB-ARC domain is found at 139 to 442 (AERVDAARVE…GEGFIDRNKG (304 aa)). 181-188 (GMGGVGKT) contacts ATP. LRR repeat units lie at residues 512–533 (VARR…PESP), 534–555 (QLIT…FFRL), 558–580 (MLVV…ISEC), 582–604 (SLQY…VELR), and 605–627 (KLLY…SGLT).

This sequence belongs to the disease resistance NB-LRR family.

In terms of biological role, probable disease resistance protein. The polypeptide is Probable disease resistance protein At5g63020 (Arabidopsis thaliana (Mouse-ear cress)).